A 316-amino-acid polypeptide reads, in one-letter code: Galectin-8 (316 aa).

Galectin domains lie at 18 to 151 and 186 to 316; these read YVST…IGFR and FEAR…VRSW. R68, N78, and E88 together coordinate a carbohydrate. Residue 248 to 254 coordinates a beta-D-galactoside; sequence WGEEERN.

Homodimer. Interacts with CALCOCO2/NDP52. Interacts with PDPN; the interaction is glycosylation-dependent; may participate in connection of the lymphatic endothelium to the surrounding extracellular matrix. In terms of tissue distribution, expressed in liver, kidney, cardiac muscle, lung, and brain.

The protein resides in the cytoplasmic vesicle. Its subcellular location is the cytoplasm. It is found in the cytosol. Its function is as follows. Beta-galactoside-binding lectin that acts as a sensor of membrane damage caused by infection and restricts the proliferation of infecting pathogens by targeting them for autophagy. Detects membrane rupture by binding beta-galactoside ligands located on the lumenal side of the endosome membrane; these ligands becoming exposed to the cytoplasm following rupture. Restricts infection by initiating autophagy via interaction with CALCOCO2/NDP52. Required to restrict infection of bacterial invasion such as S.typhimurium. Also required to restrict infection of Picornaviridae viruses. Has a marked preference for 3'-O-sialylated and 3'-O-sulfated glycans. This chain is Galectin-8 (Lgals8), found in Rattus norvegicus (Rat).